The following is a 257-amino-acid chain: Cilia- and flagella-associated protein 300 (257 aa).

Belongs to the CFAP300 family.

It is found in the cytoplasm. The protein resides in the cytoskeleton. The protein localises to the flagellum axoneme. Functionally, cilium- and flagellum-specific protein that plays a role in axonemal structure organization and motility. Plays a role in outer and inner dynein arm assembly. This Chlamydomonas reinhardtii (Chlamydomonas smithii) protein is Cilia- and flagella-associated protein 300.